The primary structure comprises 123 residues: cAMP-responsive element-binding protein-like 2 (123 aa).

A disordered region spans residues 1–24 (MDDSKVVGGKVKKPGKRGRKPAKI). Residues 10–21 (KVKKPGKRGRKP) are compositionally biased toward basic residues. Residues 23–86 (KIDLKAKLER…MAMDQGKIPS (64 aa)) form the bZIP domain. The segment at 29–60 (KLERSRQSARECRARKKLRYQYLEELVSSRER) is basic motif. The interval 62-69 (ICALREEL) is leucine-zipper. The segment at 93–123 (TGEEQNKSQQNSSRHPKAGKTDANTNSLVGN) is disordered. The segment covering 114-123 (DANTNSLVGN) has biased composition (polar residues).

It belongs to the bZIP family. ATF subfamily. Interacts with CREB1; regulates CREB1 phosphorylation, stability and transcriptional activity. In terms of processing, phosphorylated by AMPK.

The protein localises to the nucleus. Functionally, probable regulator of CREB1 transcriptional activity which is involved in adipose cells differentiation. May also play a regulatory role in the cell cycle. This Rattus norvegicus (Rat) protein is cAMP-responsive element-binding protein-like 2 (Crebl2).